The primary structure comprises 173 residues: Small ribosomal subunit protein uS5 (173 aa).

The 64-residue stretch at 18-81 (YVEKLVKLNR…EKAKANMVTF (64 aa)) folds into the S5 DRBM domain.

It belongs to the universal ribosomal protein uS5 family. In terms of assembly, part of the 30S ribosomal subunit. Contacts proteins S4 and S8.

With S4 and S12 plays an important role in translational accuracy. In terms of biological role, located at the back of the 30S subunit body where it stabilizes the conformation of the head with respect to the body. This is Small ribosomal subunit protein uS5 from Treponema denticola (strain ATCC 35405 / DSM 14222 / CIP 103919 / JCM 8153 / KCTC 15104).